Here is a 145-residue protein sequence, read N- to C-terminus: Ornithine decarboxylase antizyme (145 aa).

The protein belongs to the ODC antizyme family. In terms of assembly, interacts with ODC1 and thereby sterically blocks ODC homodimerization.

Ornithine decarboxylase (ODC) antizyme protein that negatively regulates ODC activity and intracellular polyamine biosynthesis and uptake in response to increased intracellular polyamine levels. Binds to ODC monomers, inhibiting the assembly of the functional ODC homodimer, and targets the monomers for ubiquitin-independent proteolytic destruction by the 26S proteasome. The protein is Ornithine decarboxylase antizyme of Onchocerca volvulus.